Reading from the N-terminus, the 377-residue chain is Flap endonuclease 1 (377 aa).

Residues 1-105 (MGIKGLSQVI…GELAKRASRQ (105 aa)) form an N-domain region. Mg(2+) is bound at residue Asp34. Arg47 and Arg71 together coordinate DNA. Position 87 (Asp87) interacts with Mg(2+). The segment at 96–115 (GELAKRASRQQKAREEREEA) is disordered. Residues 123–254 (MVDKFAKRTV…ARAVELIRQH (132 aa)) are I-domain. Glu159, Glu161, Asp180, and Asp182 together coordinate Mg(2+). Position 159 (Glu159) interacts with DNA. Positions 232 and 234 each coordinate DNA. Asp234 provides a ligand contact to Mg(2+). An interaction with PCNA region spans residues 337–345 (PQGRLDSFF). The tract at residues 350–377 (STKKEKEKPKAAAKRKRDTKSSAPKKKR) is disordered. Over residues 360-377 (AAAKRKRDTKSSAPKKKR) the composition is skewed to basic residues.

It belongs to the XPG/RAD2 endonuclease family. FEN1 subfamily. Interacts with PCNA. Three molecules of rad2 bind to one PCNA trimer with each molecule binding to one PCNA monomer. PCNA stimulates the nuclease activity without altering cleavage specificity. Requires Mg(2+) as cofactor. Phosphorylated. Phosphorylation upon DNA damage induces relocalization to the nuclear plasma.

It localises to the nucleus. The protein localises to the nucleolus. Its subcellular location is the nucleoplasm. It is found in the mitochondrion. Its function is as follows. Structure-specific nuclease with 5'-flap endonuclease and 5'-3' exonuclease activities involved in DNA replication and repair. During DNA replication, cleaves the 5'-overhanging flap structure that is generated by displacement synthesis when DNA polymerase encounters the 5'-end of a downstream Okazaki fragment. It enters the flap from the 5'-end and then tracks to cleave the flap base, leaving a nick for ligation. Also involved in the long patch base excision repair (LP-BER) pathway, by cleaving within the apurinic/apyrimidinic (AP) site-terminated flap. Acts as a genome stabilization factor that prevents flaps from equilibrating into structures that lead to duplications and deletions. Also possesses 5'-3' exonuclease activity on nicked or gapped double-stranded DNA, and exhibits RNase H activity. Also involved in replication and repair of rDNA and in repairing mitochondrial DNA. In Schizosaccharomyces japonicus (strain yFS275 / FY16936) (Fission yeast), this protein is Flap endonuclease 1.